Here is a 296-residue protein sequence, read N- to C-terminus: Ribosomal RNA small subunit methyltransferase H (296 aa).

Residues 41 to 43, Asp59, Phe86, Asp104, and Gln111 each bind S-adenosyl-L-methionine; that span reads GGY.

The protein belongs to the methyltransferase superfamily. RsmH family.

The protein localises to the cytoplasm. The catalysed reaction is cytidine(1402) in 16S rRNA + S-adenosyl-L-methionine = N(4)-methylcytidine(1402) in 16S rRNA + S-adenosyl-L-homocysteine + H(+). Specifically methylates the N4 position of cytidine in position 1402 (C1402) of 16S rRNA. This Neorickettsia sennetsu (strain ATCC VR-367 / Miyayama) (Ehrlichia sennetsu) protein is Ribosomal RNA small subunit methyltransferase H.